Consider the following 836-residue polypeptide: Protein AKNAD1 (836 aa).

Composition is skewed to polar residues over residues 159–172 (SWPKEQTPELTDQL), 181–192 (SNKPGSATTTEE), and 227–248 (SYQGQSPQKQQTEKANSGNTFK). 2 disordered regions span residues 159–248 (SWPK…NTFK) and 303–325 (LETTPESNCVEKQHQEQKGKITE). Positions 311 to 323 (CVEKQHQEQKGKI) are enriched in basic and acidic residues. Residues 372–484 (QKISQGKQMC…DVKEKMDESK (113 aa)) are a coiled coil. Disordered stretches follow at residues 510-545 (SNEIPKEHPGHPSGPRGSGGSEVTGTPQGGPQEAPN) and 575-596 (MRLSSNSGEDPNGTPRRQDCAE).

It belongs to the AKNA family.

The chain is Protein AKNAD1 (AKNAD1) from Homo sapiens (Human).